A 165-amino-acid chain; its full sequence is Ubiquitin-like protein ISG15 (165 aa).

Ubiquitin-like domains follow at residues 2 to 78 (GWDL…VDKC) and 79 to 157 (DEPL…LRGG). The residue at position 78 (cysteine 78) is an S-nitrosocysteine; alternate. The short motif at 152 to 157 (LRLRGG) is the LRLRGG element. The segment at 153 to 157 (RLRGG) is involved in the ligation of specific target proteins. Glycine 157 is covalently cross-linked (Glycyl lysine isopeptide (Gly-Lys) (interchain with K-? in acceptor proteins)). Positions 158–165 (GTEPGGRS) are cleaved as a propeptide — removed in mature form.

Homodimer; disulfide-linked. Interacts with, and is conjugated to its targets by UBE1L (E1 enzyme) and UBE2E2 (E2 enzyme). Interacts with NEDD4. Interacts with PARP12; this interaction inhibits PINK1/Parkin-dependent mitophagy. As to quaternary structure, (Microbial infection) Interacts with vaccinia virus protein E3. In terms of assembly, (Microbial infection) Interaction with influenza B NS1 protein inhibits its conjugation. (Microbial infection) Interacts (via C-terminus) with Crimean-Congo hemorrhagic fever virus (CCHFV) RNA-directed RNA polymerase L (via N-terminus); the deISGylase activity of the viral protein interferes with antiviral signaling pathways mediated by NF-kappaB and IRF signalings. As to quaternary structure, (Microbial infection) Interacts with human cytomegalovirus protein UL26; this interaction inhibits global protein ISGylation. S-nitrosylation decreases its dimerization, thereby increasing the availability as well as the solubility of monomeric ISG15 for its conjugation to cellular proteins. Post-translationally, induced as an inactive, precursor protein that is cleaved by specific proteases to expose the C-terminal diglycine (LRLRGG) motif. This motif is essential not only for its conjugation to substrates but also for its recognition by the relevant processing proteases. Detected in lymphoid cells, striated and smooth muscle, several epithelia and neurons. Expressed in neutrophils, monocytes and lymphocytes. Enhanced expression seen in pancreatic adenocarcinoma, endometrial cancer, and bladder cancer, as compared to non-cancerous tissue. In bladder cancer, the increase in expression exhibits a striking positive correlation with more advanced stages of the disease.

It is found in the cytoplasm. The protein resides in the secreted. In terms of biological role, ubiquitin-like protein which plays a key role in the innate immune response to viral infection either via its conjugation to a target protein (ISGylation) or via its action as a free or unconjugated protein. ISGylation involves a cascade of enzymatic reactions involving E1, E2, and E3 enzymes which catalyze the conjugation of ISG15 to a lysine residue in the target protein. Its target proteins include IFIT1, MX1/MxA, PPM1B, UBE2L6, UBA7, CHMP5, CHMP2A, CHMP4B and CHMP6. Isgylation of the viral sensor IFIH1/MDA5 promotes IFIH1/MDA5 oligomerization and triggers activation of innate immunity against a range of viruses, including coronaviruses, flaviviruses and picornaviruses. Can also isgylate: EIF2AK2/PKR which results in its activation, RIGI which inhibits its function in antiviral signaling response, EIF4E2 which enhances its cap structure-binding activity and translation-inhibition activity, UBE2N and UBE2E1 which negatively regulates their activity, IRF3 which inhibits its ubiquitination and degradation and FLNB which prevents its ability to interact with the upstream activators of the JNK cascade thereby inhibiting IFNA-induced JNK signaling. Exhibits antiviral activity towards both DNA and RNA viruses, including influenza A, HIV-1 and Ebola virus. Restricts HIV-1 and ebola virus via disruption of viral budding. Inhibits the ubiquitination of HIV-1 Gag and host TSG101 and disrupts their interaction, thereby preventing assembly and release of virions from infected cells. Inhibits Ebola virus budding mediated by the VP40 protein by disrupting ubiquitin ligase activity of NEDD4 and its ability to ubiquitinate VP40. ISGylates influenza A virus NS1 protein which causes a loss of function of the protein and the inhibition of virus replication. The secreted form of ISG15 can: induce natural killer cell proliferation, act as a chemotactic factor for neutrophils and act as a IFN-gamma-inducing cytokine playing an essential role in antimycobacterial immunity. The secreted form acts through the integrin ITGAL/ITGB2 receptor to initiate activation of SRC family tyrosine kinases including LYN, HCK and FGR which leads to secretion of IFNG and IL10; the interaction is mediated by ITGAL. In Homo sapiens (Human), this protein is Ubiquitin-like protein ISG15.